Reading from the N-terminus, the 580-residue chain is Microcin-J25 export ATP-binding/permease protein McjD (580 aa).

Transmembrane regions (helical) follow at residues 25–45 (FFSM…SPLI), 66–86 (VLLA…VFLF), 143–163 (VSQN…VVLS), 167–187 (WFSA…NTRL), 261–281 (AVIL…NGVV), and 286–306 (FIMI…IGAL). The 288-residue stretch at 25–312 (FFSMLFITSL…IGALLSEIRQ (288 aa)) folds into the ABC transmembrane type-1 domain. An ABC transporter domain is found at 345-578 (LSIRELSFSY…NEYISGLASV (234 aa)). 378 to 385 (GPSGSGKS) contacts ATP.

Belongs to the ABC transporter superfamily. As to quaternary structure, homodimer.

The protein resides in the cell inner membrane. Functionally, is able to protect a cell, which harbors the plasmid pTUC100 encoding microcin J25, against microcin J25. Is required for microcin J25 export out of the producing cells. This Escherichia coli protein is Microcin-J25 export ATP-binding/permease protein McjD (mcjD).